The following is a 364-amino-acid chain: Probable protein phosphatase methylesterase 1 (364 aa).

The interval 1 to 53 (MSDDKLDTLPDLQSETSHVTTPHRQNDLLRQAVTHGRPPPVPSTSTSGKKREM) is disordered. Over residues 11 to 23 (DLQSETSHVTTPH) the composition is skewed to polar residues. Catalysis depends on residues Ser-164, Asp-190, and His-316.

The protein belongs to the AB hydrolase superfamily.

The enzyme catalyses [phosphatase 2A protein]-C-terminal L-leucine methyl ester + H2O = [phosphatase 2A protein]-C-terminal L-leucine + methanol + H(+). In terms of biological role, demethylates proteins that have been reversibly carboxymethylated. The chain is Probable protein phosphatase methylesterase 1 from Caenorhabditis elegans.